The chain runs to 1314 residues: Ubinuclein-2 (1314 aa).

A disordered region spans residues Met-1–Val-113. At Ser-13 the chain carries Phosphoserine. Composition is skewed to basic and acidic residues over residues Arg-16–Arg-31 and Ala-55–Arg-67. Residues Pro-81–Arg-96 are compositionally biased toward pro residues. Phosphothreonine is present on Thr-229. Ser-236 is modified (phosphoserine). Residues Ser-236 to Gly-288 form a disordered region. Residue Thr-238 is modified to Phosphothreonine. A Glycyl lysine isopeptide (Lys-Gly) (interchain with G-Cter in SUMO2) cross-link involves residue Lys-258. At Ser-297 the chain carries Phosphoserine. 9 disordered regions span residues Asp-322–Pro-345, Ala-400–Ser-424, Leu-559–Gly-584, Leu-657–Ser-709, Ala-785–His-818, Gly-849–Gln-893, Tyr-948–Thr-975, Ala-1003–Val-1185, and Pro-1288–Gln-1314. A compositionally biased stretch (low complexity) spans Pro-330 to Leu-341. Ser-402, Ser-405, and Ser-408 each carry phosphoserine. Over residues Gly-415–Ser-424 the composition is skewed to polar residues. Composition is skewed to basic and acidic residues over residues Gln-560–Ser-570 and Lys-673–Lys-684. At Ser-570 the chain carries Phosphoserine. Over residues Ala-685 to Ser-709 the composition is skewed to low complexity. A compositionally biased stretch (polar residues) spans Ser-792 to Leu-801. Positions Gly-849 to Ala-879 are enriched in low complexity. Residues Ser-883–Gln-893 are compositionally biased toward polar residues. The span at Ala-1003–Pro-1013 shows a compositional bias: low complexity. A compositionally biased stretch (pro residues) spans Ala-1014–Ser-1028. Positions Pro-1029–Ser-1040 are enriched in low complexity. Lys-1036 bears the N6-acetyllysine mark. 2 stretches are compositionally biased toward polar residues: residues Pro-1057–Ser-1132 and Arg-1142–Arg-1153. Residue Ser-1091 is modified to Phosphoserine. The residue at position 1116 (Lys-1116) is an N6-acetyllysine. A compositionally biased stretch (basic and acidic residues) spans Gly-1305–Gln-1314.

This sequence belongs to the ubinuclein family.

The sequence is that of Ubinuclein-2 (Ubn2) from Mus musculus (Mouse).